A 343-amino-acid chain; its full sequence is 7-epi-alpha-eudesmol synthase ((2E,6E)-farnesyl diphosphate cyclizing) (343 aa).

2 residues coordinate Mg(2+): Asp-80 and Asp-84. The DDXXD motif motif lies at 80-84; it reads DDQFD. Arg-177 lines the substrate pocket. Mg(2+) contacts are provided by Asn-223 and Ser-227. Arg-230 is a binding site for substrate. Glu-231 contributes to the Mg(2+) binding site. Substrate is bound at residue 317–318; that stretch reads RY.

Belongs to the terpene synthase family. Mg(2+) serves as cofactor.

The catalysed reaction is (2E,6E)-farnesyl diphosphate + H2O = 7-epi-alpha-eudesmol + diphosphate. Its pathway is secondary metabolite biosynthesis; terpenoid biosynthesis. Catalyzes the conversion of (2E,6E)-farnesyl diphosphate (FPP) to yield the bicyclic sesquiterpenol 7-epi-alpha-eudesmol via a 1,10-cyclization, which requires the abstraction of the pyrophosphate from FPP to yield the (E,E)-germacradienyl cation. The only accepted substrate is (2E,6E)-farnesyl diphosphate (FPP). The sequence is that of 7-epi-alpha-eudesmol synthase ((2E,6E)-farnesyl diphosphate cyclizing) from Streptomyces viridochromogenes (strain DSM 40736 / JCM 4977 / BCRC 1201 / Tue 494).